The primary structure comprises 631 residues: Interferon-induced GTP-binding protein Mx1 (631 aa).

In terms of domain architecture, Dynamin-type G spans 33-306 (DLALPAIAVI…LTSHICKSLP (274 aa)). The G1 motif stretch occupies residues 43–50 (GDQSSGKS). 43–50 (GDQSSGKS) serves as a coordination point for GTP. Residues 68 to 70 (VTR) are G2 motif. Residues 144–147 (DLPG) are G3 motif. Residues 144–148 (DLPGI) and 213–216 (TKPD) contribute to the GTP site. The interval 213–216 (TKPD) is G4 motif. A G5 motif region spans residues 245–248 (KCRG). Residues 307 to 332 (LLEDQINSSHQSASEELQKYGADIPE) are bundle signaling element (BSE). A middle domain region spans residues 332 to 499 (EDDRTRMSFL…HFQMEQIVYC (168 aa)). A stalk region spans residues 333-601 (DDRTRMSFLV…TSKCSWFLEE (269 aa)). The interval 520-522 (KTK) is critical for lipid-binding. The GED domain occupies 543-631 (TTEMTQHLKA…ARQKLAKFSD (89 aa)).

This sequence belongs to the TRAFAC class dynamin-like GTPase superfamily. Dynamin/Fzo/YdjA family. In terms of assembly, homooligomer. Oligomerizes into multimeric filamentous or ring-like structures by virtue of its stalk domain. Oligomerization is critical for GTPase activity, protein stability, and recognition of viral target structures. Interacts with TRPC1, TRPC3, TRPC4, TRPC5, TRPC6 and TRPC7. Interacts with HSPA5. Interacts with TUBB/TUBB5. Interacts with DDX39A and DDX39B. In terms of processing, ISGylated.

Its subcellular location is the cytoplasm. The protein localises to the nucleus. It is found in the endoplasmic reticulum membrane. It localises to the perinuclear region. Functionally, interferon-induced dynamin-like GTPase with antiviral activity against influenza A virus, (IAV), influenza B virus (IBV) and Thogoto virus (THOV). Inhibits FLUAV by interfering with the process of primary transcription, probably by affecting the viral polymerase function. This is Interferon-induced GTP-binding protein Mx1 (Mx1) from Mus musculus (Mouse).